We begin with the raw amino-acid sequence, 673 residues long: Xyloglucan glycosyltransferase 4 (673 aa).

Helical transmembrane passes span 90 to 110 (FIKACLVISIIALSIEIVAHF) and 144 to 164 (IAPLVISLSRFCTVLFLIQSL). The active site involves Asp-238. Residues Asp-297 and Asp-299 each contribute to the substrate site. Asp-391 is an active-site residue. The next 2 membrane-spanning stretches (helical) occupy residues 469-489 (LILPFYSFTLFCIILPLTMFI) and 494-514 (LPLWIICYVPIFISLLNILPS). Ser-581 bears the Phosphoserine mark. The next 2 helical transmembrane spans lie at 623–643 (VFKKELGLAFLLLTAAARSFL) and 648–668 (LHFYFLLFQGLSFLVVGLDLI).

Belongs to the glycosyltransferase 2 family. Plant cellulose synthase-like C subfamily. Homodimer. Interacts with XXT5. Interacts with FUT1, MUR3 and XLT2. In terms of tissue distribution, expressed in seedlings, roots, leaves, stems, flowers and seeds.

Its subcellular location is the golgi apparatus membrane. In terms of biological role, beta-1,4-glucan synthase rather involved in the synthesis of the xyloglucan backbone than cellulose. Seems to work simultaneously with xyloglucan 6-xylosyltransferase. Xyloglucan is a noncellulosic polysaccharides of plant cell wall and consists of a glucan backbone substituted by xylose, galactose and fucose. Associates with other xyloglucan-synthesizing enzymes to form multiprotein complexes for xyloglucan synthesis in the Golgi. This chain is Xyloglucan glycosyltransferase 4, found in Arabidopsis thaliana (Mouse-ear cress).